A 989-amino-acid polypeptide reads, in one-letter code: Protease PrtH (989 aa).

2 repeats span residues 270 to 323 and 528 to 581; these read TPTD…KCVN and SPAS…VCVD. The segment at 969–989 is disordered; sequence PRDTPWRYGKRELPPSASGMR.

The protein belongs to the peptidase C25 family.

The protein localises to the cytoplasmic vesicle. Its function is as follows. Cleaves human complement component C3. May enable P.gingivalis to evade complement-mediated killing during the immune response. Plays an important role in soft tissue infections and is a virulence factor. This chain is Protease PrtH (prtH), found in Porphyromonas gingivalis (strain ATCC BAA-308 / W83).